The primary structure comprises 1257 residues: Bifunctional autolysin (1257 aa).

An N-terminal signal peptide occupies residues methionine 1 to alanine 29. The span at glutamine 99 to glycine 137 shows a compositional bias: polar residues. 3 disordered regions span residues glutamine 99 to asparagine 150, alanine 173 to proline 217, and threonine 417 to glycine 441. Low complexity-rich tracts occupy residues alanine 173–proline 208 and serine 419–threonine 440. Residues alanine 197 to lysine 776 form an N-acetylmuramoyl-L-alanine amidase region. 7 GW domains span residues threonine 444–alanine 518, serine 520–lysine 594, threonine 613–alanine 687, serine 689–alanine 763, threonine 785–leucine 860, lysine 862–alanine 937, and alanine 944–isoleucine 1018. Residues alanine 777–lysine 1257 are endo-beta-N-acetylglucosaminidase.

In the N-terminal section; belongs to the N-acetylmuramoyl-L-alanine amidase 2 family. The protein in the C-terminal section; belongs to the glycosyl hydrolase 73 family. In terms of assembly, oligomer; forms a ring structure at the cell surface which is important for efficient partitioning of daughter cells after cell division. In terms of processing, undergoes proteolytic processing to generate the two extracellular lytic enzymes, probably at the septal region on the cell surface.

It is found in the secreted. It carries out the reaction Hydrolyzes the link between N-acetylmuramoyl residues and L-amino acid residues in certain cell-wall glycopeptides.. The catalysed reaction is an N(4)-(oligosaccharide-(1-&gt;3)-[oligosaccharide-(1-&gt;6)]-beta-D-Man-(1-&gt;4)-beta-D-GlcNAc-(1-&gt;4)-alpha-D-GlcNAc)-L-asparaginyl-[protein] + H2O = an oligosaccharide-(1-&gt;3)-[oligosaccharide-(1-&gt;6)]-beta-D-Man-(1-&gt;4)-D-GlcNAc + N(4)-(N-acetyl-beta-D-glucosaminyl)-L-asparaginyl-[protein]. Functionally, endohydrolysis of the di-N-acetylchitobiosyl unit in high-mannose glycopeptides and glycoproteins containing the -[(Man)5(GlcNAc)2]-Asn structure. One N-acetyl-D-glucosamine residue remains attached to the protein; the rest of the oligosaccharide is released intact. Cleaves the peptidoglycan connecting the daughter cells at the end of the cell division cycle, resulting in the separation of the two newly divided cells. Acts as an autolysin in penicillin-induced lysis. This Staphylococcus aureus (strain MRSA252) protein is Bifunctional autolysin (atl).